Reading from the N-terminus, the 209-residue chain is Flavin prenyltransferase UbiX (209 aa).

FMN contacts are provided by residues 13 to 15 (GAS), serine 39, 104 to 107 (STGT), cysteine 116, and arginine 139. 2 residues coordinate dimethylallyl phosphate: tyrosine 169 and arginine 185.

Belongs to the UbiX/PAD1 family.

It carries out the reaction dimethylallyl phosphate + FMNH2 = prenylated FMNH2 + phosphate. Flavin prenyltransferase that catalyzes the synthesis of the prenylated FMN cofactor (prenyl-FMN) for 4-hydroxy-3-polyprenylbenzoic acid decarboxylase UbiD. The prenyltransferase is metal-independent and links a dimethylallyl moiety from dimethylallyl monophosphate (DMAP) to the flavin N5 and C6 atoms of FMN. The chain is Flavin prenyltransferase UbiX from Pseudomonas aeruginosa (strain ATCC 15692 / DSM 22644 / CIP 104116 / JCM 14847 / LMG 12228 / 1C / PRS 101 / PAO1).